Consider the following 384-residue polypeptide: Mitogen-activated protein kinase homolog 1 (384 aa).

A Protein kinase domain is found at 32–319; the sequence is YVPIKPIGRG…VMEALQHPYM (288 aa). Residues 38-46 and K61 each bind ATP; that span reads IGRGAYGIV. Catalysis depends on D158, which acts as the Proton acceptor. T191 is subject to Phosphothreonine. The TXY motif lies at 191 to 193; it reads TEY. The residue at position 193 (Y193) is a Phosphotyrosine.

It belongs to the protein kinase superfamily. CMGC Ser/Thr protein kinase family. MAP kinase subfamily. Requires Mg(2+) as cofactor. Post-translationally, dually phosphorylated on Thr-191 and Tyr-193, which activates the enzyme. As to expression, expressed in vegetative organs such as leaf, root, or stem. In the reproductive organs, it is found in the ovary, but not in the stamen.

The catalysed reaction is L-seryl-[protein] + ATP = O-phospho-L-seryl-[protein] + ADP + H(+). The enzyme catalyses L-threonyl-[protein] + ATP = O-phospho-L-threonyl-[protein] + ADP + H(+). Its activity is regulated as follows. Activated by tyrosine and threonine phosphorylation. This is Mitogen-activated protein kinase homolog 1 (MPK1) from Petunia hybrida (Petunia).